Consider the following 197-residue polypeptide: Carnitine operon protein CaiE (197 aa).

The interval 177 to 197 is disordered; it reads TAPEANRPRLRGTTEVKPKGQ. Positions 188 to 197 are enriched in basic and acidic residues; it reads GTTEVKPKGQ.

It belongs to the transferase hexapeptide repeat family.

It participates in amine and polyamine metabolism; carnitine metabolism. Its function is as follows. Overproduction of CaiE stimulates the activity of CaiB and CaiD. In Proteus sp. (strain LE138), this protein is Carnitine operon protein CaiE.